Reading from the N-terminus, the 274-residue chain is MNKEFIKSIVVSSPWEKVEIARHKDRPTGKYYIDNIFKDFIEFHGDRLFGDDKAVIGGIASFEDISVTVIAITKGANTNENIERNFGMPNPEGYRKALRLMKQAEKFNRPVICFIDTPGAFCGVGAEERGQGSAIANNLFELSRLKTPIISIVIGEGGSGGALALTVADKILMLENAVYSILSPEGFASILWKDSKRVKEAANVMKITAQDLNEFGIIDTVIKEPRGGAHKNPQKQVTLIKKELMNAMNEMKNIETNQMINERYDKFRKIGTLE.

Residues 2–250 (NKEFIKSIVV…KKELMNAMNE (249 aa)) enclose the CoA carboxyltransferase C-terminal domain.

This sequence belongs to the AccA family. In terms of assembly, acetyl-CoA carboxylase is a heterohexamer composed of biotin carboxyl carrier protein (AccB), biotin carboxylase (AccC) and two subunits each of ACCase subunit alpha (AccA) and ACCase subunit beta (AccD).

The protein localises to the cytoplasm. It catalyses the reaction N(6)-carboxybiotinyl-L-lysyl-[protein] + acetyl-CoA = N(6)-biotinyl-L-lysyl-[protein] + malonyl-CoA. The protein operates within lipid metabolism; malonyl-CoA biosynthesis; malonyl-CoA from acetyl-CoA: step 1/1. Component of the acetyl coenzyme A carboxylase (ACC) complex. First, biotin carboxylase catalyzes the carboxylation of biotin on its carrier protein (BCCP) and then the CO(2) group is transferred by the carboxyltransferase to acetyl-CoA to form malonyl-CoA. The polypeptide is Acetyl-coenzyme A carboxylase carboxyl transferase subunit alpha (Clostridium botulinum (strain Eklund 17B / Type B)).